The chain runs to 316 residues: MPMQGAHRKLLGSLNSTPTATSNLGLAANHTGAPCLEVSIPDGLFLSLGLVSLVENVLVVAAIAKNRNLHSSMYCFICCLALSDLLVSGSNMLETAVILLLEAGALATRTSVVQQLHNTIDVLTCSSMLCSLCFLGAIAVDRYISIFYALRYHSIMTLPRAQRAIAAIWVASVLSSTLFITYYDHAAVLLCLVVFFLAMLVLMAVLYVHMLARACQHAHGIIRLHKRQSPAHQGFGLRGAATLTILLGIFFLCWGPFFLHLTLVVFCPQHLTCSCIFKNFKVFLTLIICNTIIDPLIYAFRSQELRRTLKEVLCSW.

Over Met-1–Glu-37 the chain is Extracellular. N-linked (GlcNAc...) asparagine glycosylation occurs at Asn-29. Residues Val-38–Ile-63 form a helical membrane-spanning segment. The Cytoplasmic portion of the chain corresponds to Ala-64 to Ser-72. The helical transmembrane segment at Met-73–Leu-93 threads the bilayer. At Glu-94–Asn-118 the chain is on the extracellular side. The helical transmembrane segment at Thr-119–Val-140 threads the bilayer. Over Asp-141 to Arg-163 the chain is Cytoplasmic. The chain crosses the membrane as a helical span at residues Ala-164–Tyr-183. At Asp-184–Cys-191 the chain is on the extracellular side. A helical transmembrane segment spans residues Leu-192 to Leu-211. The Cytoplasmic portion of the chain corresponds to Ala-212–Ala-240. The chain crosses the membrane as a helical span at residues Ala-241–Phe-266. At Cys-267 to Asn-279 the chain is on the extracellular side. The helical transmembrane segment at Phe-280 to Phe-300 threads the bilayer. Topologically, residues Arg-301 to Trp-316 are cytoplasmic. Cys-314 carries S-palmitoyl cysteine lipidation.

It belongs to the G-protein coupled receptor 1 family. Interacts with MGRN1, but does not undergo MGRN1-mediated ubiquitination; this interaction competes with GNAS-binding and thus inhibits agonist-induced cAMP production. Interacts with OPN3; the interaction results in a decrease in MC1R-mediated cAMP signaling and ultimately a decrease in melanin production in melanocytes.

Its subcellular location is the cell membrane. In terms of biological role, receptor for MSH (alpha, beta and gamma) and ACTH. The activity of this receptor is mediated by G proteins which activate adenylate cyclase. Mediates melanogenesis, the production of eumelanin (black/brown) and phaeomelanin (red/yellow), via regulation of cAMP signaling in melanocytes. This is Melanocyte-stimulating hormone receptor (MC1R) from Leontocebus fuscicollis (Brown-mantled tamarin).